The following is a 780-amino-acid chain: Zinc finger protein GLIS3 (780 aa).

Polar residues-rich tracts occupy residues Pro80 to Thr92 and Val106 to Leu115. 2 disordered regions span residues Pro80–Ala148 and Pro290–His315. Residues Ser135–Ala148 are compositionally biased toward basic residues. Positions Leu293–His308 are enriched in pro residues. The C2H2-type 1 zinc finger occupies His345–His370. Residues Phe379–His406 form a C2H2-type 2; atypical zinc finger. 3 C2H2-type zinc fingers span residues Asn412–His436, Tyr442–His466, and Tyr472–His496. Disordered regions lie at residues Asp485 to Glu512 and Leu527 to Gly670. The short motif at Arg490 to Lys506 is the Bipartite nuclear localization signal element. The segment covering Ser497 to Glu512 has biased composition (basic and acidic residues). The span at His567–Ala577 shows a compositional bias: low complexity. The segment covering Val593 to Pro605 has biased composition (polar residues).

The protein belongs to the GLI C2H2-type zinc-finger protein family. As to expression, in the embryo, expressed at high levels in the kidney and testis. In the adult, expressed at high levels in the kidney and uterus and at lower levels in the brain, lung, skeletal muscle and pancreas.

It is found in the nucleus. In terms of biological role, acts both as a repressor and activator of transcription. Binds to the consensus sequence 5'-GACCACCCAC-3'. This chain is Zinc finger protein GLIS3, found in Mus musculus (Mouse).